The following is a 363-amino-acid chain: Mitogen-activated protein kinase 12 (363 aa).

The region spanning 25 to 309 (YKDLKQVGTG…AAEALAFPFF (285 aa)) is the Protein kinase domain. ATP-binding positions include 31 to 39 (VGTGAYGTV) and Lys-54. Asp-151 serves as the catalytic Proton acceptor. Thr-181 is subject to Phosphothreonine. The short motif at 181–183 (TGY) is the TXY element. At Tyr-183 the chain carries Phosphotyrosine.

This sequence belongs to the protein kinase superfamily. CMGC Ser/Thr protein kinase family. MAP kinase subfamily. The cofactor is Mg(2+). In terms of processing, dually phosphorylated on Thr-181 and Tyr-183, which activates the enzyme.

The protein resides in the cytoplasm. The enzyme catalyses L-seryl-[protein] + ATP = O-phospho-L-seryl-[protein] + ADP + H(+). It carries out the reaction L-threonyl-[protein] + ATP = O-phospho-L-threonyl-[protein] + ADP + H(+). Its activity is regulated as follows. Activated by threonine and tyrosine phosphorylation. In terms of biological role, serine/threonine kinase which acts as an essential component of the MAP kinase signal transduction pathway. MAPK12 is one of the four p38 MAPKs which play an important role in the cascades of cellular responses evoked by extracellular stimuli such as pro-inflammatory cytokines or physical stress leading to direct activation of transcription factors. Accordingly, p38 MAPKs phosphorylate a broad range of proteins and it has been estimated that they may have approximately 200 to 300 substrates each. Some of the targets are downstream kinases such as MAPKAPK2, which are activated through phosphorylation and further phosphorylate additional targets. The polypeptide is Mitogen-activated protein kinase 12 (mapk12) (Danio rerio (Zebrafish)).